The sequence spans 691 residues: Dynamin-1-like protein (691 aa).

Positions 22–301 (IIQLPQIAVV…LMHHIRDCLP (280 aa)) constitute a Dynamin-type G domain. The G1 motif stretch occupies residues 32 to 39 (GTQSSGKS). Residue 32–40 (GTQSSGKSS) coordinates GTP. The segment at 58–60 (VTR) is G2 motif. Residues 145-148 (DLPG) form a G3 motif region. The segment at 214 to 217 (TKLD) is G4 motif. GTP contacts are provided by residues 214 to 220 (TKLDLMD) and 245 to 248 (NRSQ). Residues 244–247 (VNRS) are G5 motif. The segment at 343 to 488 (YCNTIEGTAK…NEMVHNLVAI (146 aa)) is middle domain. Basic and acidic residues-rich tracts occupy residues 522–531 (LPTSVPRDKM) and 551–563 (KKGD…EKTK). The tract at residues 522 to 573 (LPTSVPRDKMAGGAQAEQEGGTGTWRGMLKKGDEGQGEEKTKLQSSIPASPQ) is disordered. One can recognise a GED domain in the interval 599-690 (CEVIERLIKS…VIAEIRETHL (92 aa)). The segment at 609 to 623 (YFLIVRKNIQDSVPK) is important for homodimerization.

This sequence belongs to the TRAFAC class dynamin-like GTPase superfamily. Dynamin/Fzo/YdjA family. Homotetramer; dimerizes through the N-terminal GTP-middle region of one molecule binding to the GED domain of another DNM1L molecule. Oligomerizes in a GTP-dependent manner to form membrane-associated tubules with a spiral pattern.

It localises to the cytoplasm. Its subcellular location is the cytosol. The protein resides in the golgi apparatus. It is found in the endomembrane system. The protein localises to the mitochondrion outer membrane. It localises to the peroxisome. Its subcellular location is the membrane. The protein resides in the clathrin-coated pit. It is found in the cytoplasmic vesicle. The protein localises to the secretory vesicle. It localises to the synaptic vesicle membrane. The catalysed reaction is GTP + H2O = GDP + phosphate + H(+). Its function is as follows. Functions in mitochondrial and peroxisomal division. Mediates membrane fission through oligomerization into membrane-associated tubular structures that wrap around the scission site to constrict and sever the mitochondrial membrane through a GTP hydrolysis-dependent mechanism. The specific recruitment at scission sites is mediated by membrane receptors like MFF, MIEF1 and MIEF2 for mitochondrial membranes. While the recruitment by the membrane receptors is GTP-dependent, the following hydrolysis of GTP induces the dissociation from the receptors and allows DNM1L filaments to curl into closed rings that are probably sufficient to sever a double membrane. May play a role in the circadian control of mitochondrial ATP production. The polypeptide is Dynamin-1-like protein (Danio rerio (Zebrafish)).